Reading from the N-terminus, the 280-residue chain is Killer cell lectin-like receptor 7 (280 aa).

Residues 1–44 are Cytoplasmic-facing; sequence MSEQEVTYSTVRFHESSRLQKLVRTEEPQRPREACYREYSVPWK. Residues 45–66 form a helical; Signal-anchor for type II membrane protein membrane-spanning segment; that stretch reads LIVIACGILCFLLLVTVALLAI. The Extracellular segment spans residues 67 to 280; the sequence is TIFQHSQQKH…CGKRLDKFPH (214 aa). N-linked (GlcNAc...) asparagine glycosylation occurs at Asn104. In terms of domain architecture, C-type lectin spans 156–275; sequence GFEKYWFCYG…SYICICGKRL (120 aa). 4 disulfides stabilise this stretch: Cys163-Cys168, Cys181-Cys269, Cys185-Cys271, and Cys250-Cys263. An N-linked (GlcNAc...) asparagine glycan is attached at Asn239.

In terms of assembly, homodimer; disulfide-linked.

The protein localises to the membrane. Functionally, receptor on natural killer (NK) cells for class I MHC. In Mus musculus (Mouse), this protein is Killer cell lectin-like receptor 7 (Klra7).